Consider the following 427-residue polypeptide: Glutamate-1-semialdehyde 2,1-aminomutase (427 aa).

Lys266 bears the N6-(pyridoxal phosphate)lysine mark.

Belongs to the class-III pyridoxal-phosphate-dependent aminotransferase family. HemL subfamily. Homodimer. Requires pyridoxal 5'-phosphate as cofactor.

It localises to the cytoplasm. It catalyses the reaction (S)-4-amino-5-oxopentanoate = 5-aminolevulinate. The protein operates within porphyrin-containing compound metabolism; protoporphyrin-IX biosynthesis; 5-aminolevulinate from L-glutamyl-tRNA(Glu): step 2/2. This chain is Glutamate-1-semialdehyde 2,1-aminomutase, found in Dechloromonas aromatica (strain RCB).